A 273-amino-acid chain; its full sequence is HTH-type transcriptional activator RhaS (273 aa).

In terms of domain architecture, HTH araC/xylS-type spans 174–272 (YQLLDWLQNN…SQSPRDLRSQ (99 aa)). DNA-binding regions (H-T-H motif) lie at residues 191–212 (PELA…KNKT) and 239–262 (VTDI…KREF).

Binds DNA as a dimer.

The protein resides in the cytoplasm. Its function is as follows. Activates expression of the rhaBAD and rhaT operons. The protein is HTH-type transcriptional activator RhaS of Yersinia pseudotuberculosis serotype O:1b (strain IP 31758).